The following is a 453-amino-acid chain: o-phthalyl amidase (453 aa).

In terms of assembly, monomer. The N-terminus is blocked.

The catalysed reaction is a phtalamide + H2O = phthalate + a primary amine. Inhibited by iodoacetate, p-hydroxymercuric benzoate and copper ions. Catalyzes the removal of the phthalyl group from phthalyl amides generating phthalate and an amine. The enzyme has a broad substrate specificity and hydrolyzes phthalylated amino acids, peptides, beta-lactams, aromatic and aliphatic amines; substitutions allowed on the phthalyl group include 6-F, 6-NH(2), 3-OH, and a nitrogen in the aromatic ring ortho to the carboxy group attached to the amine. In Xanthobacter agilis, this protein is o-phthalyl amidase.